Reading from the N-terminus, the 393-residue chain is Bone morphogenetic protein 15 (393 aa).

An N-terminal signal peptide occupies residues Met-1 to Thr-25. The propeptide occupies Gln-26–Arg-268. 2 N-linked (GlcNAc...) asparagine glycosylation sites follow: Asn-86 and Asn-237. 3 cysteine pairs are disulfide-bonded: Cys-292–Cys-358, Cys-321–Cys-390, and Cys-325–Cys-392. Asn-374 is a glycosylation site (N-linked (GlcNAc...) asparagine).

Belongs to the TGF-beta family. In terms of assembly, homodimer. But, in contrast to other members of this family, cannot be disulfide-linked.

The protein localises to the secreted. In terms of biological role, may be involved in follicular development. Oocyte-specific growth/differentiation factor that stimulates folliculogenesis and granulosa cell (GC) growth. This chain is Bone morphogenetic protein 15 (BMP15), found in Ovis aries (Sheep).